Here is a 114-residue protein sequence, read N- to C-terminus: UPF0342 protein OEOE_0901 (114 aa).

Belongs to the UPF0342 family.

This Oenococcus oeni (strain ATCC BAA-331 / PSU-1) protein is UPF0342 protein OEOE_0901.